Consider the following 629-residue polypeptide: Endoglucanase 15 (629 aa).

The signal sequence occupies residues 1 to 30 (MAKNGGAHGAATLFGLLALASMVKLGFVAG). The active-site Nucleophile is the Asp-87. Residues His-421, Asp-473, and Glu-482 contribute to the active site. Residues Asn-520, Asn-540, and Asn-561 are each glycosylated (N-linked (GlcNAc...) asparagine).

It belongs to the glycosyl hydrolase 9 (cellulase E) family.

It is found in the secreted. The enzyme catalyses Endohydrolysis of (1-&gt;4)-beta-D-glucosidic linkages in cellulose, lichenin and cereal beta-D-glucans.. The protein is Endoglucanase 15 of Oryza sativa subsp. japonica (Rice).